A 272-amino-acid chain; its full sequence is MARLAAFDMDGTLLMPDHHLGEKTLSTLARLRERDITLTFATGRHALEMQHILGAISLDAYLITGNGTRVHSLEGELLHRDDLPADVAELVLYQQWDTRASMHIFNDDGWFTGKEIPALLQAFVYSGFRYQIIDVKKMPLGSVTKICFCGDHDDLTRLQIQLHEALGERAHLCFSATDCLEVLPVGCNKGAALTVLTQHLGLSLRDCMAFGDAMNDREMLGSVGSGFIMGNAMPQLRAELPHLPVIGHCRNQAVSHYLTHWLDYPHLPYSPE.

Asp-8 acts as the Nucleophile in catalysis. Residues Asp-8, Asp-10, and Asp-212 each contribute to the Mg(2+) site.

This sequence belongs to the HAD-like hydrolase superfamily. Cof family. The cofactor is Mg(2+).

It catalyses the reaction 4-amino-2-methyl-5-(diphosphooxymethyl)pyrimidine + H2O = 4-amino-2-methyl-5-(phosphooxymethyl)pyrimidine + phosphate + H(+). Functionally, catalyzes the hydrolysis of 4-amino-2-methyl-5-hydroxymethylpyrimidine pyrophosphate (HMP-PP) to 4-amino-2-methyl-5-hydroxymethylpyrimidine phosphate (HMP-P). This Escherichia coli O157:H7 protein is HMP-PP phosphatase.